The chain runs to 427 residues: MSNNQILFERAQKTIPGGVNSPVRAFRSVGGTPRFVARAQGPYFWDADGKQYIDYIGSWGPMIVGHVHPEVLDAVQKVLADGFSFGAPTEAEIEIAEEICKLVPSIEQVRMVSSGTEATMSALRLARGFTGRSRIVKFEGCYHGHADSLLVKAGSGLLTFGNPTSAGVPADIAKHTTVLEYNNVAALEEAFGAFGDEIAAVIVEPVAGNMNLVRGTPEFLNALRALCTKHGAVLIFDEVMCGFRVALGGAQAHYGIAADLTCLGKVIGGGMPAAAFGGRRDIMAHLAPLGGVYQAGTLSGNPIAVAAGLKTLQLIQAPGFYEALTAQTKRLADGLAAEARAAGVPFAADSIGAMFGLYFAERVPTSFAEVTKSDIERFNRFFHLMLDEGVYFAPSAYEAGFVSSTHDDAVIDATLAAARRAFAALAA.

Lysine 265 is modified (N6-(pyridoxal phosphate)lysine).

This sequence belongs to the class-III pyridoxal-phosphate-dependent aminotransferase family. HemL subfamily. In terms of assembly, homodimer. It depends on pyridoxal 5'-phosphate as a cofactor.

The protein resides in the cytoplasm. It carries out the reaction (S)-4-amino-5-oxopentanoate = 5-aminolevulinate. Its pathway is porphyrin-containing compound metabolism; protoporphyrin-IX biosynthesis; 5-aminolevulinate from L-glutamyl-tRNA(Glu): step 2/2. The protein is Glutamate-1-semialdehyde 2,1-aminomutase of Burkholderia multivorans (strain ATCC 17616 / 249).